The following is an 808-amino-acid chain: Na(+)/H(+) antiporter 2 (808 aa).

9 helical membrane passes run 12-32 (HVAY…SLFV), 36-56 (LYIG…PHCL), 70-90 (ITLE…SVEL), 105-125 (LLVP…WILV), 128-148 (LNFP…PVLA), 174-194 (CNDG…LYPG), 203-223 (WICV…CIIG), 244-264 (FLAF…MLGV), and 267-287 (LLVS…AAKT). N-linked (GlcNAc...) asparagine glycosylation is present at N291. The next 5 membrane-spanning stretches (helical) occupy residues 294–314 (NVID…ILPW), 319–339 (NPDI…VIFL), 361–381 (AMFI…AITS), 409–429 (VMAC…IVHG), and 432–452 (VAVI…LPTG). 2 disordered regions span residues 478–499 (QRLD…SGMV) and 541–562 (HAST…NGRA). Polar residues predominate over residues 542 to 561 (ASTNDSHGTTTANLGTSNGR). 2 N-linked (GlcNAc...) asparagine glycosylation sites follow: N545 and N602. The segment at 774 to 808 (LHSEDEMADDEAESENDMDYEDSDGPASRFKDHAD) is disordered. The segment covering 779–797 (EMADDEAESENDMDYEDSD) has biased composition (acidic residues).

The protein belongs to the fungal Na(+)/H(+) exchanger family.

It is found in the membrane. Sodium export from cell, takes up external protons in exchange for internal sodium ions. Seems to be poorly expressed. This Zygosaccharomyces rouxii protein is Na(+)/H(+) antiporter 2 (SOD22).